The sequence spans 326 residues: DNA-directed RNA polymerase subunit alpha (326 aa).

An alpha N-terminal domain (alpha-NTD) region spans residues Met1–Glu232. Positions Phe246–Glu326 are alpha C-terminal domain (alpha-CTD).

Belongs to the RNA polymerase alpha chain family. In terms of assembly, homodimer. The RNAP catalytic core consists of 2 alpha, 1 beta, 1 beta' and 1 omega subunit. When a sigma factor is associated with the core the holoenzyme is formed, which can initiate transcription.

It carries out the reaction RNA(n) + a ribonucleoside 5'-triphosphate = RNA(n+1) + diphosphate. In terms of biological role, DNA-dependent RNA polymerase catalyzes the transcription of DNA into RNA using the four ribonucleoside triphosphates as substrates. This is DNA-directed RNA polymerase subunit alpha from Vesicomyosocius okutanii subsp. Calyptogena okutanii (strain HA).